The chain runs to 245 residues: 1-(5-phosphoribosyl)-5-[(5-phosphoribosylamino)methylideneamino] imidazole-4-carboxamide isomerase (245 aa).

Asp10 (proton acceptor) is an active-site residue. Asp135 acts as the Proton donor in catalysis.

It belongs to the HisA/HisF family.

It is found in the cytoplasm. The enzyme catalyses 1-(5-phospho-beta-D-ribosyl)-5-[(5-phospho-beta-D-ribosylamino)methylideneamino]imidazole-4-carboxamide = 5-[(5-phospho-1-deoxy-D-ribulos-1-ylimino)methylamino]-1-(5-phospho-beta-D-ribosyl)imidazole-4-carboxamide. It functions in the pathway amino-acid biosynthesis; L-histidine biosynthesis; L-histidine from 5-phospho-alpha-D-ribose 1-diphosphate: step 4/9. The polypeptide is 1-(5-phosphoribosyl)-5-[(5-phosphoribosylamino)methylideneamino] imidazole-4-carboxamide isomerase (Methanosarcina barkeri (strain Fusaro / DSM 804)).